A 141-amino-acid chain; its full sequence is Large ribosomal subunit protein bL17 (141 aa).

The protein belongs to the bacterial ribosomal protein bL17 family. Part of the 50S ribosomal subunit. Contacts protein L32.

This is Large ribosomal subunit protein bL17 from Chlamydia trachomatis serovar D (strain ATCC VR-885 / DSM 19411 / UW-3/Cx).